Here is a 204-residue protein sequence, read N- to C-terminus: Dephospho-CoA kinase (204 aa).

Positions 12 to 204 constitute a DPCK domain; sequence RIGVTGGIAS…AWRDQISSIC (193 aa). 20–25 contacts ATP; that stretch reads ASGKSS.

The protein belongs to the CoaE family.

It localises to the cytoplasm. The catalysed reaction is 3'-dephospho-CoA + ATP = ADP + CoA + H(+). It participates in cofactor biosynthesis; coenzyme A biosynthesis; CoA from (R)-pantothenate: step 5/5. Catalyzes the phosphorylation of the 3'-hydroxyl group of dephosphocoenzyme A to form coenzyme A. The chain is Dephospho-CoA kinase from Prochlorococcus marinus (strain MIT 9313).